Consider the following 419-residue polypeptide: UDP-N-acetylglucosamine 1-carboxyvinyltransferase (419 aa).

Residue 22–23 (KN) coordinates phosphoenolpyruvate. R93 contacts UDP-N-acetyl-alpha-D-glucosamine. C117 functions as the Proton donor in the catalytic mechanism. Position 117 is a 2-(S-cysteinyl)pyruvic acid O-phosphothioketal (C117). UDP-N-acetyl-alpha-D-glucosamine is bound by residues D306 and I328.

This sequence belongs to the EPSP synthase family. MurA subfamily.

It localises to the cytoplasm. The catalysed reaction is phosphoenolpyruvate + UDP-N-acetyl-alpha-D-glucosamine = UDP-N-acetyl-3-O-(1-carboxyvinyl)-alpha-D-glucosamine + phosphate. It functions in the pathway cell wall biogenesis; peptidoglycan biosynthesis. In terms of biological role, cell wall formation. Adds enolpyruvyl to UDP-N-acetylglucosamine. This chain is UDP-N-acetylglucosamine 1-carboxyvinyltransferase, found in Vesicomyosocius okutanii subsp. Calyptogena okutanii (strain HA).